Here is a 301-residue protein sequence, read N- to C-terminus: Probable alpha-L-glutamate ligase (301 aa).

In terms of domain architecture, ATP-grasp spans 104–287 (LQLLSRKGVG…IAGMIIEYIE (184 aa)). ATP is bound by residues K141, 178-179 (EY), D187, and 211-213 (RSN). Residues D248, E260, and N262 each contribute to the Mg(2+) site. Mn(2+) contacts are provided by D248, E260, and N262.

It belongs to the RimK family. Mg(2+) serves as cofactor. It depends on Mn(2+) as a cofactor.

This Photobacterium profundum (strain SS9) protein is Probable alpha-L-glutamate ligase.